Reading from the N-terminus, the 368-residue chain is tRNA-specific 2-thiouridylase MnmA (368 aa).

ATP is bound by residues 11–18 and Met37; that span reads GMSGGVDS. Positions 97 to 99 are interaction with target base in tRNA; sequence NPD. The Nucleophile role is filled by Cys102. Cys102 and Cys199 are disulfide-bonded. ATP is bound at residue Gly127. The tract at residues 149-151 is interaction with tRNA; that stretch reads KDQ. Cys199 functions as the Cysteine persulfide intermediate in the catalytic mechanism. The tract at residues 311-312 is interaction with tRNA; the sequence is RY.

The protein belongs to the MnmA/TRMU family. In terms of assembly, interacts with TusE.

Its subcellular location is the cytoplasm. The enzyme catalyses S-sulfanyl-L-cysteinyl-[protein] + uridine(34) in tRNA + AH2 + ATP = 2-thiouridine(34) in tRNA + L-cysteinyl-[protein] + A + AMP + diphosphate + H(+). Its function is as follows. Catalyzes the 2-thiolation of uridine at the wobble position (U34) of tRNA(Lys), tRNA(Glu) and tRNA(Gln), leading to the formation of s(2)U34, the first step of tRNA-mnm(5)s(2)U34 synthesis. Sulfur is provided by IscS, via a sulfur-relay system. Binds ATP and its substrate tRNAs. The polypeptide is tRNA-specific 2-thiouridylase MnmA (Klebsiella pneumoniae (strain 342)).